Reading from the N-terminus, the 632-residue chain is Extracellular metalloproteinase 1 (632 aa).

The first 19 residues, Met-1–Ala-19, serve as a signal peptide directing secretion. A propeptide spanning residues His-20–His-243 is cleaved from the precursor. Asn-284 is a glycosylation site (N-linked (GlcNAc...) asparagine). Zn(2+) is bound at residue His-427. Glu-428 is a catalytic residue. His-431 is a binding site for Zn(2+). 2 N-linked (GlcNAc...) asparagine glycosylation sites follow: Asn-591 and Asn-620.

This sequence belongs to the peptidase M36 family. The cofactor is Zn(2+).

It is found in the secreted. Its function is as follows. Secreted metalloproteinase that allows assimilation of proteinaceous substrates and probably acts as a virulence factor. This is Extracellular metalloproteinase 1 (MEP1) from Arthroderma gypseum (strain ATCC MYA-4604 / CBS 118893) (Microsporum gypseum).